The sequence spans 283 residues: 4-hydroxy-3-methylbut-2-enyl diphosphate reductase (283 aa).

A [4Fe-4S] cluster-binding site is contributed by Cys-12. Residues His-40 and His-73 each contribute to the (2E)-4-hydroxy-3-methylbut-2-enyl diphosphate site. Residues His-40 and His-73 each contribute to the dimethylallyl diphosphate site. 2 residues coordinate isopentenyl diphosphate: His-40 and His-73. Cys-95 contacts [4Fe-4S] cluster. His-123 lines the (2E)-4-hydroxy-3-methylbut-2-enyl diphosphate pocket. Dimethylallyl diphosphate is bound at residue His-123. Position 123 (His-123) interacts with isopentenyl diphosphate. The Proton donor role is filled by Glu-125. Position 161 (Thr-161) interacts with (2E)-4-hydroxy-3-methylbut-2-enyl diphosphate. Cys-189 is a [4Fe-4S] cluster binding site. (2E)-4-hydroxy-3-methylbut-2-enyl diphosphate contacts are provided by Ser-217, Asn-219, and Ser-261. Dimethylallyl diphosphate-binding residues include Ser-217, Asn-219, and Ser-261. 3 residues coordinate isopentenyl diphosphate: Ser-217, Asn-219, and Ser-261.

This sequence belongs to the IspH family. Requires [4Fe-4S] cluster as cofactor.

The enzyme catalyses isopentenyl diphosphate + 2 oxidized [2Fe-2S]-[ferredoxin] + H2O = (2E)-4-hydroxy-3-methylbut-2-enyl diphosphate + 2 reduced [2Fe-2S]-[ferredoxin] + 2 H(+). The catalysed reaction is dimethylallyl diphosphate + 2 oxidized [2Fe-2S]-[ferredoxin] + H2O = (2E)-4-hydroxy-3-methylbut-2-enyl diphosphate + 2 reduced [2Fe-2S]-[ferredoxin] + 2 H(+). Its pathway is isoprenoid biosynthesis; dimethylallyl diphosphate biosynthesis; dimethylallyl diphosphate from (2E)-4-hydroxy-3-methylbutenyl diphosphate: step 1/1. It participates in isoprenoid biosynthesis; isopentenyl diphosphate biosynthesis via DXP pathway; isopentenyl diphosphate from 1-deoxy-D-xylulose 5-phosphate: step 6/6. Functionally, catalyzes the conversion of 1-hydroxy-2-methyl-2-(E)-butenyl 4-diphosphate (HMBPP) into a mixture of isopentenyl diphosphate (IPP) and dimethylallyl diphosphate (DMAPP). Acts in the terminal step of the DOXP/MEP pathway for isoprenoid precursor biosynthesis. This is 4-hydroxy-3-methylbut-2-enyl diphosphate reductase from Citrifermentans bemidjiense (strain ATCC BAA-1014 / DSM 16622 / JCM 12645 / Bem) (Geobacter bemidjiensis).